A 661-amino-acid chain; its full sequence is MDSAPNFIPRLLLLSLLIVSIPLTSSQSDANTTNPSPSPPSDSDLCNGVFVSYTHTKGSKIPPNDTANQPYRFESVITVLNHGRDELKSWRVFVKFAHREILVSASNAVLSDGSSLPVSVENGTVFAGYPSSDLKSAIQTAGDVTQMQARVELVGTQFGVAPPNVPLPKNITLATDGWKCPKATQKGTNVLQVCCIPDPDYDNREIIDNEFLPRKDGDLTIMYDVVRSYSSNYMAQVTMENHNPLGRLDNWKLSFDWMRDEFIYTMKGAYPSIVDSSDCVDGPQAKHYQDLDFSNVLSCARRPTVIDLPPTKYNDSTFGLIPFCCRNGTILPRSMDPSKSSSVFQMQVYKMPPDLNISALSPPQNWRINGTLNPDYKCGPPVRVSPSQFVDPSGLPSNRTAFASWQVVCNITQPKDASPRCCVSFSAYFNDSIVPCKTCACGCSSNKAARACSATAPSLLLPQQALLVPFENRTELTVAWAYLKQRPVPNPMPCGDNCGVSINWHLATDYRGGWTARVTVFNWGETDFVDWFTAVQMKNAAPGFEKAYSFNASTIGINGKNNTIFMEGLPGLNYLVAERDGENPLKNPRIPGKQQSVMSFTKKLTPGINVPGGDGFPSKVFFNGEECSLPTILPMRSSQHRKHISVFLLALPVLALLILRA.

Positions 1-26 (MDSAPNFIPRLLLLSLLIVSIPLTSS) are cleaved as a signal peptide. The segment at 26–45 (SQSDANTTNPSPSPPSDSDL) is disordered. 14 N-linked (GlcNAc...) asparagine glycosylation sites follow: N31, N64, N122, N170, N314, N327, N356, N369, N398, N410, N430, N472, N551, and N561. S637 carries GPI-anchor amidated serine lipidation. Residues 638–661 (SQHRKHISVFLLALPVLALLILRA) constitute a propeptide, removed in mature form.

The protein belongs to the COBRA family. As to expression, expressed in roots, stems, leaves, flowers and siliques.

The protein localises to the cell membrane. This is COBRA-like protein 7 (COBL7) from Arabidopsis thaliana (Mouse-ear cress).